We begin with the raw amino-acid sequence, 168 residues long: Ribosome maturation factor RimM (168 aa).

Residues 96–168 (EGDYYWTDLI…IIVVEWDADF (73 aa)) form the PRC barrel domain.

Belongs to the RimM family. As to quaternary structure, binds ribosomal protein uS19.

The protein resides in the cytoplasm. In terms of biological role, an accessory protein needed during the final step in the assembly of 30S ribosomal subunit, possibly for assembly of the head region. Essential for efficient processing of 16S rRNA. May be needed both before and after RbfA during the maturation of 16S rRNA. It has affinity for free ribosomal 30S subunits but not for 70S ribosomes. The polypeptide is Ribosome maturation factor RimM (Coxiella burnetii (strain Dugway 5J108-111)).